A 361-amino-acid chain; its full sequence is Chorismate synthase (361 aa).

NADP(+)-binding residues include Arg48 and Arg54. FMN-binding positions include 125–127 (RSS), 238–239 (NA), Gly278, 293–297 (KPTSS), and Arg319.

The protein belongs to the chorismate synthase family. Homotetramer. The cofactor is FMNH2.

It catalyses the reaction 5-O-(1-carboxyvinyl)-3-phosphoshikimate = chorismate + phosphate. It participates in metabolic intermediate biosynthesis; chorismate biosynthesis; chorismate from D-erythrose 4-phosphate and phosphoenolpyruvate: step 7/7. Catalyzes the anti-1,4-elimination of the C-3 phosphate and the C-6 proR hydrogen from 5-enolpyruvylshikimate-3-phosphate (EPSP) to yield chorismate, which is the branch point compound that serves as the starting substrate for the three terminal pathways of aromatic amino acid biosynthesis. This reaction introduces a second double bond into the aromatic ring system. The polypeptide is Chorismate synthase (Salmonella typhi).